Consider the following 272-residue polypeptide: Hydroxyethylthiazole kinase (272 aa).

Met45 is a substrate binding site. ATP is bound by residues Arg121 and Thr168. Substrate is bound at residue Gly195.

The protein belongs to the Thz kinase family. As to quaternary structure, homotrimer. The cofactor is Mg(2+).

It catalyses the reaction 5-(2-hydroxyethyl)-4-methylthiazole + ATP = 4-methyl-5-(2-phosphooxyethyl)-thiazole + ADP + H(+). It participates in cofactor biosynthesis; thiamine diphosphate biosynthesis; 4-methyl-5-(2-phosphoethyl)-thiazole from 5-(2-hydroxyethyl)-4-methylthiazole: step 1/1. Its function is as follows. Catalyzes the phosphorylation of the hydroxyl group of 4-methyl-5-beta-hydroxyethylthiazole (THZ). The sequence is that of Hydroxyethylthiazole kinase from Bacillus subtilis (strain 168).